The following is a 109-amino-acid chain: Small ribosomal subunit protein bS6 (109 aa).

The protein belongs to the bacterial ribosomal protein bS6 family.

Its function is as follows. Binds together with bS18 to 16S ribosomal RNA. In Dehalococcoides mccartyi (strain ATCC BAA-2266 / KCTC 15142 / 195) (Dehalococcoides ethenogenes (strain 195)), this protein is Small ribosomal subunit protein bS6.